A 181-amino-acid chain; its full sequence is uncharacterized protein (181 aa).

Positions 25-47 (ELANEVSAGDEEPYDDDIWESED) are disordered. Positions 32–47 (AGDEEPYDDDIWESED) are enriched in acidic residues. The chain crosses the membrane as a helical span at residues 149–169 (ILTLILLSCGLLMLFIGYPIL).

The protein localises to the cytoplasm. Its subcellular location is the membrane. This is an uncharacterized protein from Schizosaccharomyces pombe (strain 972 / ATCC 24843) (Fission yeast).